The chain runs to 236 residues: CHD1 helical C-terminal domain containing protein 1 (236 aa).

The tract at residues 1–29 (MEASDWQGGEGDKPLEKVGSVPCLERSSS) is disordered. The interval 44-145 (LSQDTFKICK…TNQTAKFLAA (102 aa)) is CHD1 helical C-terminal domain (CHCT). Residues 197–236 (LEEPRSSHCSRGDSLRKLPQKPKLKKKRIKERLESPKSCS) are disordered. Over residues 198 to 212 (EEPRSSHCSRGDSLR) the composition is skewed to basic and acidic residues. The span at 214–226 (LPQKPKLKKKRIK) shows a compositional bias: basic residues. Over residues 227 to 236 (ERLESPKSCS) the composition is skewed to basic and acidic residues.

In terms of tissue distribution, exclusively expressed in testes.

The protein localises to the cytoplasm. The protein resides in the nucleus. May play a role in regulation of apoptosis. This is CHD1 helical C-terminal domain containing protein 1 (Chct1) from Mus musculus (Mouse).